The sequence spans 123 residues: NADH-quinone oxidoreductase subunit A (123 aa).

The next 3 helical transmembrane spans lie at 11-31, 64-84, and 93-113; these read YLPI…IMIL, ICFY…AFLV, and IGKI…IGFI.

Belongs to the complex I subunit 3 family. In terms of assembly, NDH-1 is composed of 14 different subunits. Subunits NuoA, H, J, K, L, M, N constitute the membrane sector of the complex.

The protein localises to the cell inner membrane. It carries out the reaction a quinone + NADH + 5 H(+)(in) = a quinol + NAD(+) + 4 H(+)(out). NDH-1 shuttles electrons from NADH, via FMN and iron-sulfur (Fe-S) centers, to quinones in the respiratory chain. The immediate electron acceptor for the enzyme in this species is believed to be ubiquinone. Couples the redox reaction to proton translocation (for every two electrons transferred, four hydrogen ions are translocated across the cytoplasmic membrane), and thus conserves the redox energy in a proton gradient. In Rickettsia conorii (strain ATCC VR-613 / Malish 7), this protein is NADH-quinone oxidoreductase subunit A.